The sequence spans 117 residues: Venom nerve growth factor (117 aa).

Intrachain disulfides connect cysteine 12-cysteine 77, cysteine 55-cysteine 105, and cysteine 65-cysteine 107. A glycan (N-linked (GlcNAc...) asparagine) is linked at asparagine 21.

This sequence belongs to the NGF-beta family. In terms of assembly, homodimer; non-covalently linked. Expressed by the venom gland.

The protein localises to the secreted. Its function is as follows. Nerve growth factor is important for the development and maintenance of the sympathetic and sensory nervous systems. It stimulates division and differentiation of sympathetic and embryonic sensory neurons as well as basal forebrain cholinergic neurons in the brain. Its relevance in the snake venom is not clear. However, it has been shown to inhibit metalloproteinase-dependent proteolysis of platelet glycoprotein Ib alpha, suggesting a metalloproteinase inhibition to prevent metalloprotease autodigestion and/or protection against prey proteases. Binds a lipid between the two protein chains in the homodimer. The lipid-bound form promotes histamine relase from mouse mast cells, contrary to the lipid-free form. The polypeptide is Venom nerve growth factor (Daboia russelii (Russel's viper)).